Consider the following 637-residue polypeptide: Nuclear receptor subfamily 2 group C member 1-B (637 aa).

Positions 149 to 224 (VELCVVCGDK…LGMKQDSVQC (76 aa)) form a DNA-binding region, nuclear receptor. 2 NR C4-type zinc fingers span residues 152 to 172 (CVVC…CEGC) and 188 to 207 (CRGS…CQYC). Residues 383–624 (CVGSGSNLLP…SIIPYILRME (242 aa)) form the NR LBD domain.

The protein belongs to the nuclear hormone receptor family. NR2 subfamily.

It is found in the nucleus. Its function is as follows. Orphan nuclear receptor. Binds the IR7 element in the promoter of its own gene in an autoregulatory negative feedback mechanism. Primarily repressor of a broad range of genes. Binds to hormone response elements (HREs) consisting of two 5'-AGGTCA-3' half site direct repeat consensus sequences. This chain is Nuclear receptor subfamily 2 group C member 1-B (nr2c1-b), found in Xenopus laevis (African clawed frog).